The chain runs to 137 residues: Neutral phospholipase A2 ammodytin I2 (137 aa).

An N-terminal signal peptide occupies residues 1 to 16 (MRTLWIVAVCLIGVEG). Disulfide bonds link cysteine 42–cysteine 131, cysteine 44–cysteine 60, cysteine 59–cysteine 111, cysteine 65–cysteine 137, cysteine 66–cysteine 104, cysteine 73–cysteine 97, and cysteine 91–cysteine 102. 3 residues coordinate Ca(2+): tyrosine 43, glycine 45, and glycine 47. The active site involves histidine 63. Residue aspartate 64 coordinates Ca(2+). The active site involves aspartate 105.

The protein belongs to the phospholipase A2 family. Group II subfamily. D49 sub-subfamily. Ca(2+) serves as cofactor. As to expression, expressed by the venom gland.

Its subcellular location is the secreted. The enzyme catalyses a 1,2-diacyl-sn-glycero-3-phosphocholine + H2O = a 1-acyl-sn-glycero-3-phosphocholine + a fatty acid + H(+). Functionally, snake venom phospholipase A2 (PLA2) that has enzymatic activity but is non-toxic. Displays low binding affinity and enzymatic activity on phosphatidylserine-containing vesicles and HEK-293 plasma membranes, in contrast to ammodytoxins that have high activity on these phospholipids. PLA2 catalyzes the calcium-dependent hydrolysis of the 2-acyl groups in 3-sn-phosphoglycerides. The polypeptide is Neutral phospholipase A2 ammodytin I2 (Vipera ammodytes ammodytes (Western sand viper)).